The primary structure comprises 789 residues: Glycerol-3-phosphate acyltransferase (789 aa).

The HXXXXD motif motif lies at 276–281 (HRSYID).

The protein belongs to the GPAT/DAPAT family.

The protein localises to the cell membrane. It catalyses the reaction sn-glycerol 3-phosphate + an acyl-CoA = a 1-acyl-sn-glycero-3-phosphate + CoA. The protein operates within phospholipid metabolism; CDP-diacylglycerol biosynthesis; CDP-diacylglycerol from sn-glycerol 3-phosphate: step 1/3. This Mycobacterium bovis (strain ATCC BAA-935 / AF2122/97) protein is Glycerol-3-phosphate acyltransferase.